The chain runs to 695 residues: Centrosomal protein kizuna (695 aa).

Residues M1 to L12 are compositionally biased toward gly residues. Residues M1–S24 are disordered. Residues A15–S24 are compositionally biased toward low complexity. Coiled-coil stretches lie at residues E29 to K57 and V102 to D132. Disordered regions lie at residues E261 to E313, H351 to T391, Q444 to P465, and S633 to T695. 2 stretches are compositionally biased toward polar residues: residues G263 to S274 and L282 to T297. Basic and acidic residues-rich tracts occupy residues L299 to E313 and D360 to E377. Residues G382–T391 are compositionally biased toward low complexity. T391 bears the Phosphothreonine; by PLK1 mark. Over residues D448 to P465 the composition is skewed to basic and acidic residues. The segment covering S633–L645 has biased composition (low complexity). A phosphoserine mark is found at S667, S670, and S672. Residues A676–P686 show a composition bias toward basic and acidic residues.

The protein belongs to the kizuna family. As to quaternary structure, interacts with AKAP9, CEP72, ODF2, PCNT and TUBGCP2. In terms of processing, phosphorylation at Thr-391 by PLK1 is not needed for centrosomal localization or pericentriolar material expansion but is indispensable for spindle-pole stabilization.

It is found in the cytoplasm. The protein resides in the cytoskeleton. The protein localises to the microtubule organizing center. Its subcellular location is the centrosome. It localises to the cilium basal body. In terms of biological role, centrosomal protein required for establishing a robust mitotic centrosome architecture that can endure the forces that converge on the centrosomes during spindle formation. Required for stabilizing the expanded pericentriolar material around the centriole. This chain is Centrosomal protein kizuna (Kiz), found in Mus musculus (Mouse).